The chain runs to 155 residues: Small ribosomal subunit protein uS7 (155 aa).

Belongs to the universal ribosomal protein uS7 family. In terms of assembly, part of the 30S ribosomal subunit. Contacts proteins S9 and S11.

Its function is as follows. One of the primary rRNA binding proteins, it binds directly to 16S rRNA where it nucleates assembly of the head domain of the 30S subunit. Is located at the subunit interface close to the decoding center, probably blocks exit of the E-site tRNA. This chain is Small ribosomal subunit protein uS7, found in Mycoplasmoides gallisepticum (strain R(low / passage 15 / clone 2)) (Mycoplasma gallisepticum).